Reading from the N-terminus, the 465-residue chain is Ribulose bisphosphate carboxylase large chain (465 aa).

N6,N6,N6-trimethyllysine is present on Lys4. Asn113 and Thr163 together coordinate substrate. The active-site Proton acceptor is Lys165. A substrate-binding site is contributed by Lys167. Positions 191, 193, and 194 each coordinate Mg(2+). The residue at position 191 (Lys191) is an N6-carboxylysine. Residue His284 is the Proton acceptor of the active site. Substrate contacts are provided by Arg285, His317, and Ser369.

This sequence belongs to the RuBisCO large chain family. Type I subfamily. Heterohexadecamer of 8 large chains and 8 small chains; disulfide-linked. The disulfide link is formed within the large subunit homodimers. Mg(2+) serves as cofactor. The disulfide bond which can form in the large chain dimeric partners within the hexadecamer appears to be associated with oxidative stress and protein turnover.

The protein localises to the plastid. It is found in the chloroplast. The catalysed reaction is 2 (2R)-3-phosphoglycerate + 2 H(+) = D-ribulose 1,5-bisphosphate + CO2 + H2O. It catalyses the reaction D-ribulose 1,5-bisphosphate + O2 = 2-phosphoglycolate + (2R)-3-phosphoglycerate + 2 H(+). Functionally, ruBisCO catalyzes two reactions: the carboxylation of D-ribulose 1,5-bisphosphate, the primary event in carbon dioxide fixation, as well as the oxidative fragmentation of the pentose substrate in the photorespiration process. Both reactions occur simultaneously and in competition at the same active site. The chain is Ribulose bisphosphate carboxylase large chain from Cornus oblonga.